The primary structure comprises 710 residues: Proline-rich receptor-like protein kinase PERK13 (710 aa).

The segment at Met1–Gly229 is disordered. Residues Met1–Thr235 lie on the Extracellular side of the membrane. 4 stretches are compositionally biased toward pro residues: residues Ser7–Asp21, Ala29–Pro130, Pro137–Ser151, and Ala168–Pro188. A glycan (N-linked (GlcNAc...) asparagine) is linked at Asn191. A compositionally biased stretch (low complexity) spans Ser209–Ser220. A helical membrane pass occupies residues Met236 to Val256. Over Arg257–Tyr710 the chain is Cytoplasmic. The tract at residues Gln289–Met334 is disordered. Residues Tyr301–Ser315 are compositionally biased toward low complexity. Thr342 bears the Phosphothreonine mark. The Protein kinase domain maps to Phe353–Met619. ATP-binding positions include Leu359–Val367 and Lys381. Position 426 is a phosphotyrosine (Tyr426). Asp477 (proton acceptor) is an active-site residue. Ser510 bears the Phosphoserine mark. Phosphothreonine occurs at positions 511 and 516. The residue at position 524 (Tyr524) is a Phosphotyrosine. The interval Ser676–Tyr710 is disordered.

This sequence belongs to the protein kinase superfamily. Ser/Thr protein kinase family. Interacts with KIPK1 and KIPK2 (via its cytosolic domain). Mostly expressed in roots, especially in root hairs.

It is found in the cell membrane. The catalysed reaction is L-seryl-[protein] + ATP = O-phospho-L-seryl-[protein] + ADP + H(+). The enzyme catalyses L-threonyl-[protein] + ATP = O-phospho-L-threonyl-[protein] + ADP + H(+). In terms of biological role, negatively regulates root hair elongation. The polypeptide is Proline-rich receptor-like protein kinase PERK13 (PERK13) (Arabidopsis thaliana (Mouse-ear cress)).